Consider the following 606-residue polypeptide: Chaperone protein DnaK (606 aa).

Thr174 is modified (phosphothreonine; by autocatalysis). Residues 576–606 (QAAGSANPGGSQGTSQGNVYEADYKVEDDNK) form a disordered region. Basic and acidic residues predominate over residues 597 to 606 (ADYKVEDDNK).

The protein belongs to the heat shock protein 70 family.

Its function is as follows. Acts as a chaperone. The sequence is that of Chaperone protein DnaK from Caldanaerobacter subterraneus subsp. tengcongensis (strain DSM 15242 / JCM 11007 / NBRC 100824 / MB4) (Thermoanaerobacter tengcongensis).